Here is a 459-residue protein sequence, read N- to C-terminus: MSRNTATQFVAVLAAAAMGVYSLLVLGATTSLTGAASACQTWPSCNGQWFALQSLDLVVVWGHRTAAALTGLAVVGAAVLAWRTGASRRVRTAVTLALALYPVQVVIGAYTAMSAGAAPFTGVHLTLGVGIFASLVVALAWTLDAQTGDLPSAEWEGEPRHTDDGDPTQPGIVRAYVQLMKPRLMWLLCLVAGAGMALASSQLGAGQQLSAATVVLTLGGGVLSIGASGTFNHVLEREQDEKMARTDDRPVVTDRIPPRNALAFGVVLGVASLAAFAAVNLLTAVLGLTAIAFYSIVYTLVLKPNTRQSTVIGGAAGALPALIGWVAVTGAVGVGGVVLAGVIFLWTPAHFYNLALAYKDDYERGGFPLMPVVEGEAKTRRHIVYYIGATLASAVVLAELTGLGPLYAATTVLLGAVFLYFAIRLHRERDRRAAMRSFHASNAYLGCLLVAVVLDTMVV.

The unknown stretch occupies residues 1–184 (MSRNTATQFV…AYVQLMKPRL (184 aa)). 12 helical membrane passes run 9–29 (FVAV…LGAT), 66–86 (AAAL…RTGA), 93–113 (AVTL…YTAM), 123–143 (VHLT…AWTL), 184–204 (LMWL…SQLG), 211–231 (AATV…SGTF), 262–282 (LAFG…VNLL), 284–304 (AVLG…VLKP), 325–345 (WVAV…VIFL), 382–402 (HIVY…ELTG), 403–423 (LGPL…YFAI), and 438–458 (FHAS…DTMV). The interval 185 to 459 (MWLLCLVAGA…VAVVLDTMVV (275 aa)) is protoheme IX prenyltransferase.

This sequence in the C-terminal section; belongs to the UbiA prenyltransferase family. Protoheme IX farnesyltransferase subfamily.

The protein resides in the cell membrane. The enzyme catalyses heme b + (2E,6E)-farnesyl diphosphate + H2O = Fe(II)-heme o + diphosphate. It participates in porphyrin-containing compound metabolism; heme O biosynthesis; heme O from protoheme: step 1/1. In terms of biological role, converts heme B (protoheme IX) to heme O by substitution of the vinyl group on carbon 2 of heme B porphyrin ring with a hydroxyethyl farnesyl side group. The protein is Protoheme IX farnesyltransferase (ctaB) of Halobacterium salinarum (strain ATCC 29341 / DSM 671 / R1).